Consider the following 379-residue polypeptide: 3-dehydroquinate synthase (379 aa).

Belongs to the archaeal-type DHQ synthase family.

The catalysed reaction is 2-amino-2,3,7-trideoxy-D-lyxo-hept-6-ulosonate + NAD(+) + H2O = 3-dehydroquinate + NH4(+) + NADH + H(+). Its function is as follows. Catalyzes the oxidative deamination and cyclization of 2-amino-3,7-dideoxy-D-threo-hept-6-ulosonic acid (ADH) to yield 3-dehydroquinate (DHQ), which is fed into the canonical shikimic pathway of aromatic amino acid biosynthesis. The polypeptide is 3-dehydroquinate synthase (Methanococcoides burtonii (strain DSM 6242 / NBRC 107633 / OCM 468 / ACE-M)).